The primary structure comprises 74 residues: Guanine nucleotide-binding protein G(T) subunit gamma-T1 (74 aa).

Cys-71 carries the cysteine methyl ester modification. Cys-71 carries the S-farnesyl cysteine lipid modification. The propeptide at 72–74 is removed in mature form; it reads VIS.

Belongs to the G protein gamma family. G proteins are composed of 3 units, alpha, beta and gamma. Retinal rod outer segment.

It localises to the cell membrane. Guanine nucleotide-binding proteins (G proteins) are involved as a modulator or transducer in various transmembrane signaling systems. The beta and gamma chains are required for the GTPase activity, for replacement of GDP by GTP, and for G protein-effector interaction. This Bos taurus (Bovine) protein is Guanine nucleotide-binding protein G(T) subunit gamma-T1 (GNGT1).